We begin with the raw amino-acid sequence, 1616 residues long: Protein P200 (1616 aa).

Disordered regions lie at residues 1–41 (MPKT…DKVE), 878–909 (HFQP…QAEF), 931–975 (QQLE…LDQN), 1004–1083 (DNVE…EPVD), 1100–1132 (FDKN…TVGE), and 1159–1433 (ISEP…SEEE). A 2 X 26 AA repeats region spans residues 891–1389 (EAKFDSPVEI…QEAKFDSPVE (499 aa)). The segment covering 938 to 952 (EETVVTPTEVTAFEP) has biased composition (low complexity). Composition is skewed to basic and acidic residues over residues 1012 to 1029 (QPKE…KELQ) and 1059 to 1081 (VFEK…KSEP). A run of 2 repeats spans residues 1161–1186 (EPQV…SPVE) and 1205–1236 (EIQP…SPVE). 2 stretches are compositionally biased toward polar residues: residues 1200 to 1227 (VQTQ…QTPQ) and 1242 to 1251 (EFSSEPTQQH). Residues 1205–1389 (EIQPVESQPE…QEAKFDSPVE (185 aa)) form a 2 X 32 AA repeats region. The span at 1256–1270 (ASFDEPNYDFDEPNY) shows a compositional bias: acidic residues. A compositionally biased stretch (polar residues) spans 1276-1285 (SYDSDLQPSE). Residues 1288 to 1302 (YDVDEPNYDFDEPNY) are compositionally biased toward acidic residues. Low complexity predominate over residues 1309–1323 (SEPQFEPQVEQQPGE). 2 tandem repeats follow at residues 1310-1339 (EPQF…SPVE) and 1358-1389 (EIQP…SPVE). Polar residues predominate over residues 1353–1380 (VQTQPEIQPVESQPEATFDTVQPEQTPQ). The segment covering 1392–1406 (QEPQVSSEPEVVVQP) has biased composition (low complexity). A compositionally biased stretch (acidic residues) spans 1416–1433 (VLEEPQADEIQPEASEEE).

In terms of biological role, could be an accessory structural component in cytadherence. This Mycoplasma genitalium (strain ATCC 33530 / DSM 19775 / NCTC 10195 / G37) (Mycoplasmoides genitalium) protein is Protein P200.